Reading from the N-terminus, the 244-residue chain is tRNA1(Val) (adenine(37)-N6)-methyltransferase (244 aa).

It belongs to the methyltransferase superfamily. tRNA (adenine-N(6)-)-methyltransferase family.

Its subcellular location is the cytoplasm. It catalyses the reaction adenosine(37) in tRNA1(Val) + S-adenosyl-L-methionine = N(6)-methyladenosine(37) in tRNA1(Val) + S-adenosyl-L-homocysteine + H(+). Its function is as follows. Specifically methylates the adenine in position 37 of tRNA(1)(Val) (anticodon cmo5UAC). The chain is tRNA1(Val) (adenine(37)-N6)-methyltransferase from Shewanella sediminis (strain HAW-EB3).